Here is a 254-residue protein sequence, read N- to C-terminus: Probable electron transfer flavoprotein subunit beta (254 aa).

It belongs to the ETF beta-subunit/FixA family. As to quaternary structure, heterodimer of an alpha and a beta subunit. Requires FAD as cofactor. AMP serves as cofactor.

The protein resides in the mitochondrion matrix. Functionally, the electron transfer flavoprotein serves as a specific electron acceptor for several dehydrogenases, including five acyl-CoA dehydrogenases, glutaryl-CoA and sarcosine dehydrogenase. It transfers the electrons to the main mitochondrial respiratory chain via ETF-ubiquinone oxidoreductase (ETF dehydrogenase). The protein is Probable electron transfer flavoprotein subunit beta of Schizosaccharomyces pombe (strain 972 / ATCC 24843) (Fission yeast).